The following is an 83-amino-acid chain: Small proline-rich protein 2A3 (83 aa).

5 repeat units span residues P21–P29, Q30–P38, V39–P47, S48–P56, and V57–P65. Positions P21–P65 are 5 X 9 AA approximate tandem repeats.

The protein belongs to the cornifin (SPRR) family. In terms of processing, forms five pairs of intrachain disulfide bonds.

The protein localises to the secreted. The protein resides in the extracellular space. It localises to the cytoplasmic vesicle. It is found in the secretory vesicle. Gut bactericidal protein that selectively kills Gram-positive bacteria by binding to negatively charged lipids on bacterial membranes, leading to bacterial membrane permeabilization and disruption. Specifically binds lipids bearing negatively charged headgroups, such as phosphatidic acid, phosphatidylserine (PS), cardiolipin (CL), and phosphatidylinositol phosphates, but not to zwitterionic or neutral lipids. Induced by type-2 cytokines in response to helminth infection and is required to protect against helminth-induced bacterial invasion of intestinal tissue. May also be involved in the development of the cornified envelope of squamous epithelia; however, additional evidences are required to confirm this result in vivo. The protein is Small proline-rich protein 2A3 of Mus musculus (Mouse).